A 259-amino-acid chain; its full sequence is MAIIRGIVLYTRQYKDNDLLVRILTETYGMRTFLARGAKKATSKLSAGTQPYTIVTFDGALPKRETGLGYMNDVQDIKVYSRLIEDIEANAYAALIASLIDASFEEGEKITRWYNQLYVALQKLDEGLDPQIIANIFEIQLLVPLGVAPNLRADPITGQVDGKFDYSEKYNGIISEHHFNLDDQRLMLDQKTVFYLRQFSVIDMRQVHDIKMSAITKRGLQRVIDYIYEKQVGLKPRAKSFIEQMHSWQNTLVNFRRNK.

Belongs to the RecO family.

Involved in DNA repair and RecF pathway recombination. This chain is DNA repair protein RecO, found in Leuconostoc mesenteroides subsp. mesenteroides (strain ATCC 8293 / DSM 20343 / BCRC 11652 / CCM 1803 / JCM 6124 / NCDO 523 / NBRC 100496 / NCIMB 8023 / NCTC 12954 / NRRL B-1118 / 37Y).